The following is an 81-amino-acid chain: D-alanyl carrier protein (81 aa).

A Carrier domain is found at 1–81 (MADEAIKNGV…KIIAKVEQAQ (81 aa)). S39 bears the O-(pantetheine 4'-phosphoryl)serine mark.

This sequence belongs to the DltC family. Post-translationally, 4'-phosphopantetheine is transferred from CoA to a specific serine of apo-DCP.

Its subcellular location is the cytoplasm. The protein operates within cell wall biogenesis; lipoteichoic acid biosynthesis. Functionally, carrier protein involved in the D-alanylation of lipoteichoic acid (LTA). The loading of thioester-linked D-alanine onto DltC is catalyzed by D-alanine--D-alanyl carrier protein ligase DltA. The DltC-carried D-alanyl group is further transferred to cell membrane phosphatidylglycerol (PG) by forming an ester bond, probably catalyzed by DltD. D-alanylation of LTA plays an important role in modulating the properties of the cell wall in Gram-positive bacteria, influencing the net charge of the cell wall. In Lacticaseibacillus casei (strain BL23) (Lactobacillus casei), this protein is D-alanyl carrier protein.